Reading from the N-terminus, the 145-residue chain is Large ribosomal subunit protein uL11 (145 aa).

Belongs to the universal ribosomal protein uL11 family. Part of the ribosomal stalk of the 50S ribosomal subunit. Interacts with L10 and the large rRNA to form the base of the stalk. L10 forms an elongated spine to which L12 dimers bind in a sequential fashion forming a multimeric L10(L12)X complex. One or more lysine residues are methylated.

Forms part of the ribosomal stalk which helps the ribosome interact with GTP-bound translation factors. In Porphyromonas gingivalis (strain ATCC 33277 / DSM 20709 / CIP 103683 / JCM 12257 / NCTC 11834 / 2561), this protein is Large ribosomal subunit protein uL11.